Consider the following 472-residue polypeptide: Probable diguanylate cyclase DgcF (472 aa).

The next 8 helical transmembrane spans lie at 21-41, 44-64, 90-110, 128-148, 167-187, 198-218, 237-257, and 273-293; these read SIAI…LRLV, LSLF…YVWL, VSLA…LLVV, LFNY…IGSV, FSTG…GVLP, IALI…SLAF, LLTF…VIDI, and LGIA…AAIN. The 138-residue stretch at 330–467 folds into the GGDEF domain; the sequence is QHLTVMLLDI…GRNRTSTMRY (138 aa). Positions 338 and 339 each coordinate Mg(2+). Substrate-binding residues include Asn-346, His-351, and Asp-355. Residue Glu-381 coordinates Mg(2+).

Homodimer. The cofactor is Mg(2+).

Its subcellular location is the cell membrane. The catalysed reaction is 2 GTP = 3',3'-c-di-GMP + 2 diphosphate. It functions in the pathway purine metabolism; 3',5'-cyclic di-GMP biosynthesis. Functionally, catalyzes the synthesis of cyclic-di-GMP (c-di-GMP) via the condensation of 2 GTP molecules. The protein is Probable diguanylate cyclase DgcF of Escherichia coli O157:H7.